Here is a 479-residue protein sequence, read N- to C-terminus: Sulfate adenylyltransferase subunit 1 (479 aa).

Positions 25 to 239 constitute a tr-type G domain; the sequence is KSLLRFLTCG…EVLETVDIQR (215 aa). Positions 34 to 41 are G1; it reads GSVDDGKS. 34–41 contributes to the GTP binding site; it reads GSVDDGKS. A G2 region spans residues 92–96; it reads GITID. Positions 113–116 are G3; it reads DTPG. GTP-binding positions include 113–117 and 168–171; these read DTPGH and NKMD. Residues 168–171 are G4; the sequence is NKMD. The G5 stretch occupies residues 206 to 208; sequence SAL.

This sequence belongs to the TRAFAC class translation factor GTPase superfamily. Classic translation factor GTPase family. CysN/NodQ subfamily. As to quaternary structure, heterodimer composed of CysD, the smaller subunit, and CysN.

The catalysed reaction is sulfate + ATP + H(+) = adenosine 5'-phosphosulfate + diphosphate. The protein operates within sulfur metabolism; hydrogen sulfide biosynthesis; sulfite from sulfate: step 1/3. In terms of biological role, with CysD forms the ATP sulfurylase (ATPS) that catalyzes the adenylation of sulfate producing adenosine 5'-phosphosulfate (APS) and diphosphate, the first enzymatic step in sulfur assimilation pathway. APS synthesis involves the formation of a high-energy phosphoric-sulfuric acid anhydride bond driven by GTP hydrolysis by CysN coupled to ATP hydrolysis by CysD. This Salmonella heidelberg (strain SL476) protein is Sulfate adenylyltransferase subunit 1.